Consider the following 321-residue polypeptide: Putative sulfotransferase vep-2 (321 aa).

The chain crosses the membrane as a helical span at residues 11–31 (IARVLIIIASISVICITLFIS).

To C.elegans C41C4.1 and C18B2.2.

It is found in the membrane. This chain is Putative sulfotransferase vep-2, found in Caenorhabditis elegans.